Consider the following 411-residue polypeptide: Cytochrome P450 monooxygenase sirE (411 aa).

2 N-linked (GlcNAc...) asparagine glycosylation sites follow: Asn12 and Asn149. A helical membrane pass occupies residues 181–203 (FLNVISIFTVMMASLNVLYDILA). Asn342 carries N-linked (GlcNAc...) asparagine glycosylation. Cys352 contacts heme.

It belongs to the cytochrome P450 family. Heme is required as a cofactor.

The protein localises to the membrane. The protein operates within mycotoxin biosynthesis. Its function is as follows. Cytochrome P450 monooxygenase; part of the gene cluster that mediates the biosynthesis of sirodesmin PL, an epipolythiodioxopiperazine (ETP) characterized by a disulfide bridged cyclic dipeptide and that acts as a phytotoxin which is involved in the blackleg didease of canola. SirD catalyzes the O-prenylation of L-tyrosine (L-Tyr) in the presence of dimethylallyl diphosphate (DMAPP) to yield 4-O-dimethylallyl-L-Tyr, and therefore represents probably the first pathway-specific enzyme in the biosynthesis of sirodesmin PL. 4-O-dimethylallyl-L-Tyr, then undergoes condensation with L-Ser in a reaction catalyzed by the non-ribosomal peptide synthase sirP to form the diketopiperazine (DKP) backbone. Further bishydroxylation of the DKP performed by the cytochrome P450 monooxygenase sirC leads to the production of the intermediate phomamide. This step is essential to form the reactive thiol group required for toxicity of sirodesmin PL. The next steps of sirodesmin biosynthesis are not well understood yet, but some predictions could be made from intermediate compounds identification. Phomamide is converted into phomalizarine via oxidation, probably by sirT. Further oxidation, methylation (by sirM or sirN) and reduction steps convert phomalizarine to deacetyl sirodesmin. Finally, acetyltransferase sirH probably acetylates deacetyl sirodesmin to produce sirodesmin PL. The polypeptide is Cytochrome P450 monooxygenase sirE (Leptosphaeria maculans (Blackleg fungus)).